Reading from the N-terminus, the 463-residue chain is D-inositol 3-phosphate glycosyltransferase (463 aa).

His40 serves as a coordination point for 1D-myo-inositol 3-phosphate. UDP-N-acetyl-alpha-D-glucosamine-binding positions include 46–47 and Gly54; that span reads QP. Residues 51–56, Lys109, Tyr142, Thr166, and Arg186 contribute to the 1D-myo-inositol 3-phosphate site; that span reads DAGGMN. UDP-N-acetyl-alpha-D-glucosamine is bound by residues Arg260, Lys265, and Gln318. Mg(2+) contacts are provided by Phe327, His328, and Val330. Positions 340 and 348 each coordinate UDP-N-acetyl-alpha-D-glucosamine. Thr354 is a Mg(2+) binding site. The disordered stretch occupies residues 443–463; that stretch reads VRDPVAARKPRRWTARRGVGA.

This sequence belongs to the glycosyltransferase group 1 family. MshA subfamily. As to quaternary structure, homodimer.

The enzyme catalyses 1D-myo-inositol 3-phosphate + UDP-N-acetyl-alpha-D-glucosamine = 1D-myo-inositol 2-acetamido-2-deoxy-alpha-D-glucopyranoside 3-phosphate + UDP + H(+). Functionally, catalyzes the transfer of a N-acetyl-glucosamine moiety to 1D-myo-inositol 3-phosphate to produce 1D-myo-inositol 2-acetamido-2-deoxy-glucopyranoside 3-phosphate in the mycothiol biosynthesis pathway. In Mycobacterium ulcerans (strain Agy99), this protein is D-inositol 3-phosphate glycosyltransferase.